The sequence spans 79 residues: Small ribosomal subunit protein bS18 (79 aa).

It belongs to the bacterial ribosomal protein bS18 family. Part of the 30S ribosomal subunit. Forms a tight heterodimer with protein bS6.

Functionally, binds as a heterodimer with protein bS6 to the central domain of the 16S rRNA, where it helps stabilize the platform of the 30S subunit. The chain is Small ribosomal subunit protein bS18 from Bacillus licheniformis (strain ATCC 14580 / DSM 13 / JCM 2505 / CCUG 7422 / NBRC 12200 / NCIMB 9375 / NCTC 10341 / NRRL NRS-1264 / Gibson 46).